Consider the following 409-residue polypeptide: Ribose-phosphate pyrophosphokinase 3, chloroplastic (409 aa).

2 stretches are compositionally biased toward low complexity: residues 1–16 (MATA…PAAA) and 34–43 (PASAFARPSP). The tract at residues 1 to 43 (MATAASASASASPAAAFGAKTRRPGPSPSPSPSPASAFARPSP) is disordered. The N-terminal 44 residues, 1–44 (MATAASASASASPAAAFGAKTRRPGPSPSPSPSPASAFARPSPR), are a transit peptide targeting the chloroplast. Residues aspartate 229 and histidine 231 each contribute to the Mg(2+) site. A binding of phosphoribosylpyrophosphate region spans residues 312–327 (GRHVVIVDDLVQSGGT).

It belongs to the ribose-phosphate pyrophosphokinase family. Requires Mg(2+) as cofactor.

It localises to the plastid. The protein localises to the chloroplast. It catalyses the reaction D-ribose 5-phosphate + ATP = 5-phospho-alpha-D-ribose 1-diphosphate + AMP + H(+). The polypeptide is Ribose-phosphate pyrophosphokinase 3, chloroplastic (Oryza sativa subsp. japonica (Rice)).